The following is a 704-amino-acid chain: Glycine--tRNA ligase beta subunit (704 aa).

Belongs to the class-II aminoacyl-tRNA synthetase family. In terms of assembly, tetramer of two alpha and two beta subunits.

The protein resides in the cytoplasm. The catalysed reaction is tRNA(Gly) + glycine + ATP = glycyl-tRNA(Gly) + AMP + diphosphate. This is Glycine--tRNA ligase beta subunit from Rhizobium etli (strain CIAT 652).